A 963-amino-acid chain; its full sequence is Kinesin-1 heavy chain (963 aa).

Residue alanine 2 is modified to N-acetylalanine. Residues 8 to 325 form the Kinesin motor domain; it reads NIKVMCRFRP…LLFGQRAKTI (318 aa). 85–92 is a binding site for ATP; it reads GQTSSGKT. Lysine 213 is covalently cross-linked (Glycyl lysine isopeptide (Lys-Gly) (interchain with G-Cter in SUMO2)). Residues 329–914 are a coiled coil; sequence VCVNVELTAE…AVRSKNMARR (586 aa). Residues 908 to 963 form a disordered region; that stretch reads SKNMARRGHSAQIAKPIRPGQHPAASPTHPSAIRGGGAFVQNSQPVAVRGGGGKQV. Residues 915–963 are globular; that stretch reads GHSAQIAKPIRPGQHPAASPTHPSAIRGGGAFVQNSQPVAVRGGGGKQV. Position 933 is a phosphoserine (serine 933). Arginine 956 is modified (omega-N-methylarginine).

Belongs to the TRAFAC class myosin-kinesin ATPase superfamily. Kinesin family. Kinesin subfamily. As to quaternary structure, oligomer composed of two heavy chains and two light chains. Interacts with GRIP1 and PPP1R42. Interacts with SYBU. Interacts with JAKMIP1. Interacts with PLEKHM2. Interacts with ECPAS. Interacts with ZFYVE27. Found in a complex with OGT, RHOT1, RHOT2 and TRAK1. Interacts with APP (via cytoplasmic domain).

It is found in the cytoplasm. It localises to the cytoskeleton. The protein localises to the cytolytic granule membrane. The protein resides in the lysosome membrane. Its function is as follows. Microtubule-dependent motor required for normal distribution of mitochondria and lysosomes. Can induce formation of neurite-like membrane protrusions in non-neuronal cells in a ZFYVE27-dependent manner. Regulates centrosome and nuclear positioning during mitotic entry. During the G2 phase of the cell cycle in a BICD2-dependent manner, antagonizes dynein function and drives the separation of nuclei and centrosomes. Required for anterograde axonal transportation of MAPK8IP3/JIP3 which is essential for MAPK8IP3/JIP3 function in axon elongation. Through binding with PLEKHM2 and ARL8B, directs lysosome movement toward microtubule plus ends. Involved in NK cell-mediated cytotoxicity. Drives the polarization of cytolytic granules and microtubule-organizing centers (MTOCs) toward the immune synapse between effector NK lymphocytes and target cells. This Homo sapiens (Human) protein is Kinesin-1 heavy chain.